Here is a 407-residue protein sequence, read N- to C-terminus: CCA-adding enzyme (407 aa).

Residues glycine 32 and arginine 35 each coordinate ATP. The CTP site is built by glycine 32 and arginine 35. Mg(2+) contacts are provided by aspartate 45 and aspartate 47. Positions 116, 159, 162, 165, and 168 each coordinate ATP. CTP contacts are provided by arginine 116, aspartate 159, arginine 162, arginine 165, and arginine 168.

This sequence belongs to the tRNA nucleotidyltransferase/poly(A) polymerase family. Bacterial CCA-adding enzyme type 3 subfamily. Homodimer. The cofactor is Mg(2+).

The catalysed reaction is a tRNA precursor + 2 CTP + ATP = a tRNA with a 3' CCA end + 3 diphosphate. It catalyses the reaction a tRNA with a 3' CCA end + 2 CTP + ATP = a tRNA with a 3' CCACCA end + 3 diphosphate. Functionally, catalyzes the addition and repair of the essential 3'-terminal CCA sequence in tRNAs without using a nucleic acid template. Adds these three nucleotides in the order of C, C, and A to the tRNA nucleotide-73, using CTP and ATP as substrates and producing inorganic pyrophosphate. tRNA 3'-terminal CCA addition is required both for tRNA processing and repair. Also involved in tRNA surveillance by mediating tandem CCA addition to generate a CCACCA at the 3' terminus of unstable tRNAs. While stable tRNAs receive only 3'-terminal CCA, unstable tRNAs are marked with CCACCA and rapidly degraded. This is CCA-adding enzyme from Lactiplantibacillus plantarum (strain ATCC BAA-793 / NCIMB 8826 / WCFS1) (Lactobacillus plantarum).